The primary structure comprises 163 residues: uncharacterized protein (163 aa).

A helical transmembrane segment spans residues 7–23; the sequence is TLVAFIATFFNLAATSI.

It localises to the membrane. This is an uncharacterized protein from Saccharomyces cerevisiae (strain ATCC 204508 / S288c) (Baker's yeast).